We begin with the raw amino-acid sequence, 301 residues long: Cardiolipin synthase (CMP-forming) (301 aa).

The tract at residues 70 to 93 (SGAGKAAPRPAAGAGAAAEAPGGQ) is disordered. Low complexity predominate over residues 71 to 93 (GAGKAAPRPAAGAGAAAEAPGGQ). A run of 5 helical transmembrane segments spans residues 109–129 (IPNM…YLII), 133–153 (FNIA…DGFI), 190–212 (IPVP…VFYV), 250–270 (LILV…SIYL), and 272–292 (ILWC…YHYG).

Belongs to the CDP-alcohol phosphatidyltransferase class-I family. A divalent metal cation is required as a cofactor. In terms of tissue distribution, highly expressed in tissues such as heart, skeletal muscle and liver.

The protein localises to the mitochondrion inner membrane. The catalysed reaction is a CDP-1,2-diacyl-sn-glycerol + a 1,2-diacyl-sn-glycero-3-phospho-(1'-sn-glycerol) = a cardiolipin + CMP + H(+). Functionally, catalyzes the synthesis of cardiolipin (CL) (diphosphatidylglycerol) by specifically transferring a phosphatidyl group from CDP-diacylglycerol to phosphatidylglycerol (PG). CL is a key phospholipid in mitochondrial membranes and plays important roles in maintaining the functional integrity and dynamics of mitochondria under both optimal and stress conditions. In Homo sapiens (Human), this protein is Cardiolipin synthase (CMP-forming) (CRLS1).